A 195-amino-acid polypeptide reads, in one-letter code: Imidazoleglycerol-phosphate dehydratase (195 aa).

It belongs to the imidazoleglycerol-phosphate dehydratase family.

It localises to the cytoplasm. The enzyme catalyses D-erythro-1-(imidazol-4-yl)glycerol 3-phosphate = 3-(imidazol-4-yl)-2-oxopropyl phosphate + H2O. The protein operates within amino-acid biosynthesis; L-histidine biosynthesis; L-histidine from 5-phospho-alpha-D-ribose 1-diphosphate: step 6/9. The polypeptide is Imidazoleglycerol-phosphate dehydratase (Heliobacterium modesticaldum (strain ATCC 51547 / Ice1)).